Here is a 298-residue protein sequence, read N- to C-terminus: Acetylglutamate kinase (298 aa).

Substrate-binding positions include 69 to 70 (GG), Arg91, and Asn196.

Belongs to the acetylglutamate kinase family. ArgB subfamily.

The protein localises to the cytoplasm. It carries out the reaction N-acetyl-L-glutamate + ATP = N-acetyl-L-glutamyl 5-phosphate + ADP. It participates in amino-acid biosynthesis; L-arginine biosynthesis; N(2)-acetyl-L-ornithine from L-glutamate: step 2/4. Catalyzes the ATP-dependent phosphorylation of N-acetyl-L-glutamate. This is Acetylglutamate kinase from Rhodopseudomonas palustris (strain BisB18).